We begin with the raw amino-acid sequence, 435 residues long: uncharacterized protein (435 aa).

9 helical membrane-spanning segments follow: residues 40–60 (LVST…EAVF), 103–123 (VLWT…WLIL), 133–153 (IMLA…IYNP), 195–215 (LIHE…IIVL), 226–246 (ICTA…AVVG), 313–333 (VAVV…LFFV), 358–378 (LALP…AVDW), 381–401 (WWVM…IDRP), and 414–434 (VFVC…NNIG).

The protein localises to the cell membrane. This is an uncharacterized protein from Mycobacterium bovis (strain ATCC BAA-935 / AF2122/97).